The chain runs to 421 residues: UDP-N-acetylglucosamine 1-carboxyvinyltransferase (421 aa).

Residue 22-23 (KN) participates in phosphoenolpyruvate binding. Arg93 contributes to the UDP-N-acetyl-alpha-D-glucosamine binding site. The active-site Proton donor is the Cys117. Residue Cys117 is modified to 2-(S-cysteinyl)pyruvic acid O-phosphothioketal. UDP-N-acetyl-alpha-D-glucosamine-binding positions include 122–126 (RPVDL), Asp308, and Val330.

The protein belongs to the EPSP synthase family. MurA subfamily.

It is found in the cytoplasm. It carries out the reaction phosphoenolpyruvate + UDP-N-acetyl-alpha-D-glucosamine = UDP-N-acetyl-3-O-(1-carboxyvinyl)-alpha-D-glucosamine + phosphate. It functions in the pathway cell wall biogenesis; peptidoglycan biosynthesis. Its function is as follows. Cell wall formation. Adds enolpyruvyl to UDP-N-acetylglucosamine. The protein is UDP-N-acetylglucosamine 1-carboxyvinyltransferase of Stutzerimonas stutzeri (strain A1501) (Pseudomonas stutzeri).